Consider the following 476-residue polypeptide: RNA-binding protein 45 (476 aa).

Residues 1–14 (MDDAGGLGGSGGFR) show a composition bias toward gly residues. A disordered region spans residues 1-20 (MDDAGGLGGSGGFRPGVDSL). RRM domains lie at 26 to 106 (SRIF…IAQS) and 121 to 192 (TRIF…LAEP). Lysine 34 participates in a covalent cross-link: Glycyl lysine isopeptide (Lys-Gly) (interchain with G-Cter in SUMO2). A disordered region spans residues 192–212 (PKNKVSGSPEQDDYSSGRQEA). The segment covering 196-209 (VSGSPEQDDYSSGR) has biased composition (polar residues). Phosphoserine is present on residues serine 199 and serine 464. Residues 392–464 (ERLFVVFNPH…VRLKVMLADS (73 aa)) form the RRM 3 domain.

It is found in the cytoplasm. Its subcellular location is the nucleus. In terms of biological role, RNA-binding protein with binding specificity for poly(C). May play an important role in neural development. The sequence is that of RNA-binding protein 45 (Rbm45) from Mus musculus (Mouse).